The sequence spans 382 residues: S-adenosylmethionine synthase (382 aa).

H16 is a binding site for ATP. Position 18 (D18) interacts with Mg(2+). E44 lines the K(+) pocket. L-methionine contacts are provided by E57 and Q100. Positions 100-110 (QSPDIAQGVDN) are flexible loop. Residues 165–167 (DAK), 231–232 (RF), D240, 246–247 (RK), and K267 each bind ATP. D240 provides a ligand contact to L-methionine. K271 is a binding site for L-methionine.

It belongs to the AdoMet synthase family. Homotetramer; dimer of dimers. The cofactor is Mg(2+). K(+) serves as cofactor.

It is found in the cytoplasm. It catalyses the reaction L-methionine + ATP + H2O = S-adenosyl-L-methionine + phosphate + diphosphate. It participates in amino-acid biosynthesis; S-adenosyl-L-methionine biosynthesis; S-adenosyl-L-methionine from L-methionine: step 1/1. In terms of biological role, catalyzes the formation of S-adenosylmethionine (AdoMet) from methionine and ATP. The overall synthetic reaction is composed of two sequential steps, AdoMet formation and the subsequent tripolyphosphate hydrolysis which occurs prior to release of AdoMet from the enzyme. The sequence is that of S-adenosylmethionine synthase from Legionella pneumophila subsp. pneumophila (strain Philadelphia 1 / ATCC 33152 / DSM 7513).